The primary structure comprises 116 residues: MARQYRSDRLSQEIEKEVSDILRRRVRDPRVEGVTITGVDVTGDLQQAKIYYSILSDKASDDQKTKAGLEKASGLIRKELGSRLSIYKTPELSFIRDESVQYGDKIDQLLNKLNRD.

The protein belongs to the RbfA family. As to quaternary structure, monomer. Binds 30S ribosomal subunits, but not 50S ribosomal subunits or 70S ribosomes.

It localises to the cytoplasm. Functionally, one of several proteins that assist in the late maturation steps of the functional core of the 30S ribosomal subunit. Associates with free 30S ribosomal subunits (but not with 30S subunits that are part of 70S ribosomes or polysomes). Required for efficient processing of 16S rRNA. May interact with the 5'-terminal helix region of 16S rRNA. This chain is Ribosome-binding factor A, found in Pediococcus pentosaceus (strain ATCC 25745 / CCUG 21536 / LMG 10740 / 183-1w).